A 389-amino-acid polypeptide reads, in one-letter code: MDIINMLDEKFKNIFKRHYENVFFSPGRVNLIGEHTDYNGGHVFPCALTIGTYGLVARRNDNKVLAYSLNFDNLGVIEFSLDDLKKCKKDDWANYVKGVIDTFNKHGHNIENGFEILFYGSIPNGSGLSSSASIEVLTGIILNDLFKLNINMVEIVKMCQEAENSFIGVNCGIMDQFSIGMGKKDCAILLDCSTLEYSYSKLNMTGYKIVIANTNKKRGLADSKYNERRSECEAALKELQKVKNINSLGELTEAEFEELKDIISDPVKLRRARHAVYENQRTLKAVVSLNNNDLKTFGKLMNESHISLRDDYEVTGIELDTLVSLALESKGVIGSRMTGAGFGGCTVSIVKEDYVDEFIESIKAKYTEKIGYEPSFYIVNIADGAKKIN.

Residue 34–37 (EHTD) participates in substrate binding. Residues S68 and 125–131 (GSGLSSS) contribute to the ATP site. Residues S131 and E163 each coordinate Mg(2+). The active-site Proton acceptor is the D175. Substrate is bound at residue Y225.

The protein belongs to the GHMP kinase family. GalK subfamily.

The protein localises to the cytoplasm. It catalyses the reaction alpha-D-galactose + ATP = alpha-D-galactose 1-phosphate + ADP + H(+). Its pathway is carbohydrate metabolism; galactose metabolism. In terms of biological role, catalyzes the transfer of the gamma-phosphate of ATP to D-galactose to form alpha-D-galactose-1-phosphate (Gal-1-P). The polypeptide is Galactokinase (Clostridium acetobutylicum (strain ATCC 824 / DSM 792 / JCM 1419 / IAM 19013 / LMG 5710 / NBRC 13948 / NRRL B-527 / VKM B-1787 / 2291 / W)).